Reading from the N-terminus, the 213-residue chain is Thiopurine S-methyltransferase (213 aa).

S-adenosyl-L-methionine-binding residues include Trp-10, Leu-45, Glu-66, and Arg-121.

This sequence belongs to the class I-like SAM-binding methyltransferase superfamily. TPMT family.

It is found in the cytoplasm. It catalyses the reaction S-adenosyl-L-methionine + a thiopurine = S-adenosyl-L-homocysteine + a thiopurine S-methylether.. This is Thiopurine S-methyltransferase from Aliivibrio fischeri (strain MJ11) (Vibrio fischeri).